An 86-amino-acid polypeptide reads, in one-letter code: Large ribosomal subunit protein uL23 (86 aa).

This sequence belongs to the universal ribosomal protein uL23 family. In terms of assembly, part of the 50S ribosomal subunit. Contacts protein L29.

Binds to 23S rRNA. One of the proteins that surrounds the polypeptide exit tunnel on the outside of the ribosome. The chain is Large ribosomal subunit protein uL23 from Aeropyrum pernix (strain ATCC 700893 / DSM 11879 / JCM 9820 / NBRC 100138 / K1).